Consider the following 249-residue polypeptide: Methionine aminopeptidase 2 (249 aa).

H76 is a binding site for substrate. 3 residues coordinate a divalent metal cation: D94, D105, and H168. H175 is a substrate binding site. 2 residues coordinate a divalent metal cation: E202 and E233.

In terms of assembly, monomer. Co(2+) is required as a cofactor. Zn(2+) serves as cofactor. It depends on Mn(2+) as a cofactor. The cofactor is Fe(2+).

Its subcellular location is the cytoplasm. It catalyses the reaction Release of N-terminal amino acids, preferentially methionine, from peptides and arylamides.. Its function is as follows. Removes the N-terminal methionine from nascent proteins. The N-terminal methionine is often cleaved when the second residue in the primary sequence is small and uncharged (Met-Ala-, Cys, Gly, Pro, Ser, Thr, or Val). Requires deformylation of the N(alpha)-formylated initiator methionine before it can be hydrolyzed. The chain is Methionine aminopeptidase 2 from Bacillus subtilis (strain 168).